Here is a 142-residue protein sequence, read N- to C-terminus: Nucleoside diphosphate kinase (142 aa).

Lys-11, Phe-59, Arg-87, Thr-93, Arg-104, and Asn-114 together coordinate ATP. His-117 (pros-phosphohistidine intermediate) is an active-site residue.

This sequence belongs to the NDK family. As to quaternary structure, homotetramer. Requires Mg(2+) as cofactor.

It is found in the cytoplasm. The catalysed reaction is a 2'-deoxyribonucleoside 5'-diphosphate + ATP = a 2'-deoxyribonucleoside 5'-triphosphate + ADP. It catalyses the reaction a ribonucleoside 5'-diphosphate + ATP = a ribonucleoside 5'-triphosphate + ADP. Its function is as follows. Major role in the synthesis of nucleoside triphosphates other than ATP. The ATP gamma phosphate is transferred to the NDP beta phosphate via a ping-pong mechanism, using a phosphorylated active-site intermediate. The chain is Nucleoside diphosphate kinase from Aeromonas hydrophila subsp. hydrophila (strain ATCC 7966 / DSM 30187 / BCRC 13018 / CCUG 14551 / JCM 1027 / KCTC 2358 / NCIMB 9240 / NCTC 8049).